The chain runs to 440 residues: FAD-dependent monooxygenase afoD (440 aa).

The helical transmembrane segment at 10 to 30 (PLSIAIIGGGIIGLMTALGLL) threads the bilayer. FAD-binding residues include Glu-41, Leu-145, and Asp-320. The N-linked (GlcNAc...) asparagine glycan is linked to Asn-352.

The protein belongs to the paxM FAD-dependent monooxygenase family. It depends on FAD as a cofactor.

Its subcellular location is the membrane. FAD-dependent monooxygenase; part of the gene cluster that mediates the biosynthesis of asperfuranone, a probable antitumor agent. The polyketide synthase afoG is responsible for producing the 3,5-dimethyloctadienone moiety from acetyl-CoA, three malonyl-CoA, and two S-adenosyl methionines (SAM). The 3,5-dimethyloctadienone moiety is then loaded onto the SAT domain of afoE and extended with four malonyl-CoA and one SAM, which leads to the formation of 2,4-dihydroxy-6-(5,7-dimethyl-2-oxo-trans-3-trans-5-nonadienyl)-3-methylbenzaldehyde (compound 2) after reductive release and aldol condensation. AfoD is the next enzyme in the biosynthesis sequence and hydroxylates the side chain at the benzylic position of compound 2. After benzylic hydroxylation, a furan ring is formed after five-member ring hemiacetal formation and water elimination. AfoF and afoC are proposed to oxidize the R-diketone proton and to reduce the unconjugated carbonyl group, respectively, to generate asperfuranone. Since no intermediates could be isolated from afoF and afoC deletants, the sequence of these two enzymes is not fully understood. Moreover, since afoC deletant still produces a small amount of asperfuranone, other endogenous oxidoreductases might catalyze the same reaction with much less efficiency. The sequence is that of FAD-dependent monooxygenase afoD from Emericella nidulans (strain FGSC A4 / ATCC 38163 / CBS 112.46 / NRRL 194 / M139) (Aspergillus nidulans).